We begin with the raw amino-acid sequence, 737 residues long: Propionyl-CoA carboxylase alpha chain, mitochondrial (737 aa).

The N-terminal 61 residues, 1 to 61 (MAGLWVRTVA…QCLVVSRSLS (61 aa)), are a transit peptide targeting the mitochondrion. Residues 71–518 (TFDKILIANR…STKFLSDVYP (448 aa)) enclose the Biotin carboxylation domain. N6-acetyllysine; alternate is present on Lys74. Lys74 carries the N6-succinyllysine; alternate modification. Lys128 carries the N6-succinyllysine modification. Lys159 is subject to N6-acetyllysine; alternate. Lys159 carries the N6-succinyllysine; alternate modification. An N6-acetyllysine modification is found at Lys163. Residue Lys186 coordinates ATP. The 198-residue stretch at 190 to 387 (KLLAKRAKVN…LVQEMILVAK (198 aa)) folds into the ATP-grasp domain. Lys197 bears the N6-succinyllysine mark. N6-acetyllysine; alternate is present on Lys209. Lys209 bears the N6-succinyllysine; alternate mark. Residues 218-279 (AREI…PRHI), Glu270, and Asn305 contribute to the ATP site. At Ser261 the chain carries Phosphoserine. Lys271 carries the N6-succinyllysine modification. N6-acetyllysine; alternate is present on Lys337. The residue at position 337 (Lys337) is an N6-succinyllysine; alternate. Mg(2+) is bound by residues Glu345, Glu358, and Asn360. Mn(2+) contacts are provided by Glu345, Glu358, and Asn360. Residue Arg362 is part of the active site. N6-succinyllysine occurs at positions 394 and 416. Phe418 contributes to the biotin binding site. Lys505 carries the post-translational modification N6-acetyllysine. 4 positions are modified to N6-succinyllysine: Lys511, Lys522, Lys567, and Lys657. Positions 658 to 737 (FMLEKVPKDT…GEGDLLVELE (80 aa)) constitute a Biotinyl-binding domain. Lys703 is modified (N6-biotinyllysine; by HLCS).

The holoenzyme is a dodecamer composed of 6 PCCA/alpha subunits and 6 PCCB/beta subunits. Interacts (via the biotin carboxylation domain) with SIRT4. Interacts with SIRT3 and SIRT5. Biotin serves as cofactor. Requires Mg(2+) as cofactor. The cofactor is Mn(2+). Post-translationally, acetylated. In terms of processing, the biotin cofactor is covalently attached to the C-terminal biotinyl-binding domain and is required for the catalytic activity. Biotinylation is catalyzed by HLCS.

Its subcellular location is the mitochondrion matrix. The catalysed reaction is propanoyl-CoA + hydrogencarbonate + ATP = (S)-methylmalonyl-CoA + ADP + phosphate + H(+). It catalyses the reaction butanoyl-CoA + hydrogencarbonate + ATP = (2S)-ethylmalonyl-CoA + ADP + phosphate + H(+). Its pathway is metabolic intermediate metabolism; propanoyl-CoA degradation; succinyl-CoA from propanoyl-CoA: step 1/3. Its function is as follows. This is one of the 2 subunits of the biotin-dependent propionyl-CoA carboxylase (PCC), a mitochondrial enzyme involved in the catabolism of odd chain fatty acids, branched-chain amino acids isoleucine, threonine, methionine, and valine and other metabolites. Propionyl-CoA carboxylase catalyzes the carboxylation of propionyl-CoA/propanoyl-CoA to D-methylmalonyl-CoA/(S)-methylmalonyl-CoA. Within the holoenzyme, the alpha subunit catalyzes the ATP-dependent carboxylation of the biotin carried by the biotin carboxyl carrier (BCC) domain, while the beta subunit then transfers the carboxyl group from carboxylated biotin to propionyl-CoA. Propionyl-CoA carboxylase also significantly acts on butyryl-CoA/butanoyl-CoA, which is converted to ethylmalonyl-CoA/(2S)-ethylmalonyl-CoA. Other alternative minor substrates include (2E)-butenoyl-CoA/crotonoyl-CoA. This Rattus norvegicus (Rat) protein is Propionyl-CoA carboxylase alpha chain, mitochondrial.